The primary structure comprises 300 residues: CDP-diacylglycerol--serine O-phosphatidyltransferase (300 aa).

The next 6 membrane-spanning stretches (helical) occupy residues 10–30 (AVNL…AGLT), 74–94 (IDSL…LYAT), 95–115 (MLST…CVVL), 135–155 (EFFV…LLAL), 162–182 (GWWT…MLLI), and 207–227 (LAIF…VIIL).

This sequence belongs to the CDP-alcohol phosphatidyltransferase class-I family.

It is found in the cell membrane. It carries out the reaction a CDP-1,2-diacyl-sn-glycerol + L-serine = a 1,2-diacyl-sn-glycero-3-phospho-L-serine + CMP + H(+). This chain is CDP-diacylglycerol--serine O-phosphatidyltransferase (pssA), found in Mycobacterium leprae (strain TN).